The following is a 304-amino-acid chain: Methionyl-tRNA formyltransferase (304 aa).

107 to 110 (SLLP) serves as a coordination point for (6S)-5,6,7,8-tetrahydrofolate.

The protein belongs to the Fmt family.

The enzyme catalyses L-methionyl-tRNA(fMet) + (6R)-10-formyltetrahydrofolate = N-formyl-L-methionyl-tRNA(fMet) + (6S)-5,6,7,8-tetrahydrofolate + H(+). Functionally, attaches a formyl group to the free amino group of methionyl-tRNA(fMet). The formyl group appears to play a dual role in the initiator identity of N-formylmethionyl-tRNA by promoting its recognition by IF2 and preventing the misappropriation of this tRNA by the elongation apparatus. In Coprothermobacter proteolyticus (strain ATCC 35245 / DSM 5265 / OCM 4 / BT), this protein is Methionyl-tRNA formyltransferase.